Here is a 221-residue protein sequence, read N- to C-terminus: MWSFLLPDARRRRDRALGLAGVLRSALLVQDIARNGAQPGDLLQTCIRSVLALDSKDSLRALGDIDSLRHSLALLCPLLQRGPGNAREAELLRYSMALTTLGKRLLKNASATRRVQEGVEQAQRQIAHFADPMQRSIVAGLAQTYTEAIGILRPRIIVSGESRFLSDPDDAARIRTLLLSGIRAAVLWRQAGGRLPATILERRALCQEAEELLATHPQLTR.

It belongs to the HflD family.

Its subcellular location is the cytoplasm. It localises to the cell inner membrane. The protein is High frequency lysogenization protein HflD homolog of Acidithiobacillus ferrooxidans (strain ATCC 23270 / DSM 14882 / CIP 104768 / NCIMB 8455) (Ferrobacillus ferrooxidans (strain ATCC 23270)).